Consider the following 171-residue polypeptide: Small ribosomal subunit protein uS4 (171 aa).

Positions R103 to A167 constitute an S4 RNA-binding domain.

It belongs to the universal ribosomal protein uS4 family. In terms of assembly, part of the 30S ribosomal subunit. Contacts protein S5. The interaction surface between S4 and S5 is involved in control of translational fidelity.

One of the primary rRNA binding proteins, it binds directly to 16S rRNA where it nucleates assembly of the body of the 30S subunit. Functionally, with S5 and S12 plays an important role in translational accuracy. This Methanothermobacter thermautotrophicus (strain ATCC 29096 / DSM 1053 / JCM 10044 / NBRC 100330 / Delta H) (Methanobacterium thermoautotrophicum) protein is Small ribosomal subunit protein uS4.